A 355-amino-acid chain; its full sequence is Uroporphyrinogen decarboxylase (355 aa).

Residues Arg27 to Arg31, Asp77, Tyr154, Thr209, and His328 contribute to the substrate site.

It belongs to the uroporphyrinogen decarboxylase family. In terms of assembly, homodimer.

It localises to the cytoplasm. It catalyses the reaction uroporphyrinogen III + 4 H(+) = coproporphyrinogen III + 4 CO2. Its pathway is porphyrin-containing compound metabolism; protoporphyrin-IX biosynthesis; coproporphyrinogen-III from 5-aminolevulinate: step 4/4. In terms of biological role, catalyzes the decarboxylation of four acetate groups of uroporphyrinogen-III to yield coproporphyrinogen-III. This chain is Uroporphyrinogen decarboxylase, found in Vibrio campbellii (strain ATCC BAA-1116).